A 501-amino-acid polypeptide reads, in one-letter code: Spore development regulator VOSA (501 aa).

3 disordered regions span residues 26 to 55, 67 to 88, and 228 to 274; these read GQFGDPNLTPPQAETQMSAQASAQAVGQEP, PQRARVAQGKEKGTDRKPIDPP, and AMTT…DTRG. Residues 35-50 show a composition bias toward polar residues; the sequence is PPQAETQMSAQASAQA. The 172-residue stretch at 52 to 223 folds into the Velvet domain; sequence GQEPEPDYKL…SDQGVRLRVR (172 aa). Basic and acidic residues-rich tracts occupy residues 67–85 and 237–252; these read PQRARVAQGKEKGTDRKPI and QHAEVAKKHSEWDRKQ. Positions 253–271 are enriched in polar residues; it reads TSAVSRHSSINENDSTPTD. Positions 364–371 match the Nuclear localization signal motif; sequence MSSHHGYT. 2 disordered regions span residues 378–455 and 474–501; these read FAPH…QQTP and PGQLVGTSAPSPHLGQGYRHGMINEPGA.

Belongs to the velvet family. VosA subfamily. Forms a heterodimeric complex with VELB; the formation of the VELB-VOSA complex is light-dependent.

Its subcellular location is the nucleus. Component of the VELB-VOSA heterodimeric complex that plays a dual role in activating genes associated with spore maturation and repressing certain development-associated genes. The complex binds DNA through the DNA-binding domain of VOSA that recognizes an 11-nucleotide consensus sequence 5'-CTGGCCGCGGC-3' consisting of two motifs in the promoters of key developmental regulatory genes. Appears dispensable for the development and pathogenicity. The chain is Spore development regulator VOSA from Pyricularia oryzae (strain 70-15 / ATCC MYA-4617 / FGSC 8958) (Rice blast fungus).